The chain runs to 327 residues: GMP reductase (327 aa).

C175 acts as the Thioimidate intermediate in catalysis. Residue I204–V227 participates in NADP(+) binding.

The protein belongs to the IMPDH/GMPR family. GuaC type 2 subfamily.

The enzyme catalyses IMP + NH4(+) + NADP(+) = GMP + NADPH + 2 H(+). Functionally, catalyzes the irreversible NADPH-dependent deamination of GMP to IMP. It functions in the conversion of nucleobase, nucleoside and nucleotide derivatives of G to A nucleotides, and in maintaining the intracellular balance of A and G nucleotides. This is GMP reductase from Bacillus thuringiensis subsp. konkukian (strain 97-27).